Here is a 73-residue protein sequence, read N- to C-terminus: Myosin-IB light chain (73 aa).

2 EF-hand domains span residues 3–38 (DEKTQLIEAFYNFDGDYDGFVSVEEFRGIIRDGLPM) and 38–73 (MTEAEITEFFEAADPNNTGFIDYKAFAAMLYSVDES). The Ca(2+) site is built by Asp-16, Asp-18, Asp-20, and Glu-27.

In terms of assembly, myosin I is a dimer of a heavy and a light chain. Inability to self-assemble into filaments. Interacts with myoB. Does not interact with myoC or myoD.

In terms of biological role, functions as the light chain for myosin-B. Binds calcium with submicromolar affinity and may sense physiological calcium changes. The protein is Myosin-IB light chain (mlcB) of Dictyostelium discoideum (Social amoeba).